The primary structure comprises 893 residues: MVDTKNPGDKTLSVSPSKTLTLKPRVEQGTVRQSFSHGRTKQVVVEKRGKRRIGGEGGPADAPTAAAAAPAPAPAPVPSAAPRPAAPPPPSRPQQSRSQSPSRSGSGVVLRTLTEDERSARATALADARVRDEEERRAAEAEVARRNSAEGIAQAEREAAEARRKAEEERHRHEEEAKRKAELEAKRRFGEEEAKRPAAAATPAKSATPAARPTGAPAVRAPGVAAEAGDDDEGPRQVRRGPGGAARPVIPPKQPAAKPAPSKQRGRLTLVTALTADDVRERSIASFRRRTQRLKGHASNEPKEKLVREVIVPEAITIQELANRMSERAVDVIRMLMKQGAMHKINDVIDADTAQLIAEELGHTVKRVAASDVEEGLFDVVDNSTDTEPRSPVVTVMGHVDHGKTSLLDALRHANVVSGEAGGITQHIGAYQVTSPESGKKITFIDTPGHAAFTAMRARGAKVTDIVILVVAADDGVMPQTVEAINHAKAAGVPIIVAINKIDKPDAKPERVRTELLQYNVQVESLGGDTVDVEVSAKNKTNLDKLLEMIALQAELLDLKTNEQRPAEGTVIEAKLDRGRGPVATVLVQRGTLKVGDIIVAGAEMGRVRALISDQGDTVESAGPSVPVEVLGFNGPPEAGDRLAVVENEARARQVTSYRAHQKREKAASLTGGMRGSLEQMMSQLKTVGRKEFPLIIKADVQGSLEAILGSLEKLGTEEVAARILHAGVGGISESDVTLAEGFNAVILGFSVRANKEAAAAAKRNGIEIRYYNIIYDLVDDIKKAMSGLLAPTLRETMLGNALILEIFNISKVGKVAGCRVTDGTVERGANVRLIRDNVVVHEGKLSTLKRFKDEVKEVQSGQECGMAFENYTDMRAGDVIECYRVETIQRSL.

The interval 1–266 (MVDTKNPGDK…AKPAPSKQRG (266 aa)) is disordered. Positions 59-70 (PADAPTAAAAAP) are enriched in low complexity. Positions 71 to 92 (APAPAPVPSAAPRPAAPPPPSR) are enriched in pro residues. A compositionally biased stretch (low complexity) spans 93–104 (PQQSRSQSPSRS). Composition is skewed to basic and acidic residues over residues 128–148 (ARVRDEEERRAAEAEVARRNS) and 155–196 (AERE…EAKR). The segment covering 197 to 226 (PAAAATPAKSATPAARPTGAPAVRAPGVAA) has biased composition (low complexity). The tr-type G domain maps to 389-560 (PRSPVVTVMG…ALQAELLDLK (172 aa)). The segment at 398-405 (GHVDHGKT) is G1. Residue 398-405 (GHVDHGKT) coordinates GTP. Positions 423 to 427 (GITQH) are G2. The tract at residues 446-449 (DTPG) is G3. Residues 446–450 (DTPGH) and 500–503 (NKID) each bind GTP. The interval 500–503 (NKID) is G4. Residues 536–538 (SAK) form a G5 region.

The protein belongs to the TRAFAC class translation factor GTPase superfamily. Classic translation factor GTPase family. IF-2 subfamily.

It is found in the cytoplasm. Its function is as follows. One of the essential components for the initiation of protein synthesis. Protects formylmethionyl-tRNA from spontaneous hydrolysis and promotes its binding to the 30S ribosomal subunits. Also involved in the hydrolysis of GTP during the formation of the 70S ribosomal complex. The polypeptide is Translation initiation factor IF-2 (Rhodopseudomonas palustris (strain BisA53)).